The sequence spans 187 residues: Ribonuclease HII (187 aa).

In terms of domain architecture, RNase H type-2 spans 1-187 (MIILGIDEAG…YKPVQVLLNE (187 aa)). The a divalent metal cation site is built by aspartate 7, glutamate 8, and aspartate 99.

This sequence belongs to the RNase HII family. Requires Mn(2+) as cofactor. Mg(2+) serves as cofactor.

The protein localises to the cytoplasm. The catalysed reaction is Endonucleolytic cleavage to 5'-phosphomonoester.. Functionally, endonuclease that specifically degrades the RNA of RNA-DNA hybrids. The protein is Ribonuclease HII of Francisella tularensis subsp. mediasiatica (strain FSC147).